The primary structure comprises 141 residues: Hemoglobin subunit alpha-A (141 aa).

The 141-residue stretch at 1 to 141 (VLSAADKTNV…VSTVLTAKYR (141 aa)) folds into the Globin domain. O2 is bound at residue histidine 58. Heme b is bound at residue histidine 87.

The protein belongs to the globin family. As to quaternary structure, heterotetramer of two alpha chains and two beta chains. As to expression, red blood cells.

Its function is as follows. Involved in oxygen transport from the lung to the various peripheral tissues. In Eudynamys scolopaceus (Western koel), this protein is Hemoglobin subunit alpha-A (HBAA).